A 71-amino-acid chain; its full sequence is Large ribosomal subunit protein bL31 (71 aa).

Residues Cys16, Cys18, Cys38, and Cys41 each contribute to the Zn(2+) site.

The protein belongs to the bacterial ribosomal protein bL31 family. Type A subfamily. Part of the 50S ribosomal subunit. Zn(2+) is required as a cofactor.

Functionally, binds the 23S rRNA. This is Large ribosomal subunit protein bL31 from Neisseria meningitidis serogroup A / serotype 4A (strain DSM 15465 / Z2491).